Consider the following 133-residue polypeptide: Small ribosomal subunit protein bS6 (133 aa).

This sequence belongs to the bacterial ribosomal protein bS6 family.

Functionally, binds together with bS18 to 16S ribosomal RNA. This is Small ribosomal subunit protein bS6 from Borrelia turicatae (strain 91E135).